The chain runs to 548 residues: SH2B adapter protein 3 (548 aa).

Over residues 1 to 11 the composition is skewed to polar residues; that stretch reads MNEPTVQPSRT. Disordered stretches follow at residues 1-25, 78-108, and 128-160; these read MNEPTVQPSRTSSAPASPASPRGWS, SLAGPPGHDYRATAPPRPALPKARSSEDLGP, and RSAGELPGATSDTNDIDTTAASRPGPARKLLPW. The span at 12 to 21 shows a compositional bias: low complexity; it reads SSAPASPASP. Ser13, Ser102, and Ser129 each carry phosphoserine. A compositionally biased stretch (polar residues) spans 137-148; sequence TSDTNDIDTTAA. The PH domain occupies 168–279; that stretch reads EALKEVVLRY…WLAELRASTG (112 aa). Residues 290–313 form a disordered region; the sequence is PLSLAAEPGPARSPRGSTDSLDQG. At Ser302 the chain carries Phosphoserine. The SH2 domain maps to 336–434; that stretch reads WFHGPISRVR…ACDVRLSGYV (99 aa).

The protein belongs to the SH2B adapter family. Tyrosine phosphorylated.

Functionally, links T-cell receptor activation signal to phospholipase C-gamma-1, GRB2 and phosphatidylinositol 3-kinase. The protein is SH2B adapter protein 3 (Sh2b3) of Mus musculus (Mouse).